The primary structure comprises 185 residues: Shikimate kinase (185 aa).

Position 12 to 17 (12 to 17) interacts with ATP; it reads GSGKTT. T16 provides a ligand contact to Mg(2+). 3 residues coordinate substrate: D34, R58, and G79. ATP is bound at residue R116. R135 is a substrate binding site.

It belongs to the shikimate kinase family. Monomer. It depends on Mg(2+) as a cofactor.

The protein resides in the cytoplasm. The enzyme catalyses shikimate + ATP = 3-phosphoshikimate + ADP + H(+). Its pathway is metabolic intermediate biosynthesis; chorismate biosynthesis; chorismate from D-erythrose 4-phosphate and phosphoenolpyruvate: step 5/7. Catalyzes the specific phosphorylation of the 3-hydroxyl group of shikimic acid using ATP as a cosubstrate. This chain is Shikimate kinase, found in Corynebacterium jeikeium (strain K411).